The primary structure comprises 157 residues: 2-C-methyl-D-erythritol 2,4-cyclodiphosphate synthase (157 aa).

Residues D8 and H10 each contribute to the a divalent metal cation site. 4-CDP-2-C-methyl-D-erythritol 2-phosphate is bound by residues 8 to 10 (DIH) and 34 to 35 (HS). Position 42 (H42) interacts with a divalent metal cation. Residues 56-58 (DIG), 61-65 (FPDTD), 132-135 (TTNE), and R142 contribute to the 4-CDP-2-C-methyl-D-erythritol 2-phosphate site.

Belongs to the IspF family. In terms of assembly, homotrimer. Requires a divalent metal cation as cofactor.

The enzyme catalyses 4-CDP-2-C-methyl-D-erythritol 2-phosphate = 2-C-methyl-D-erythritol 2,4-cyclic diphosphate + CMP. It functions in the pathway isoprenoid biosynthesis; isopentenyl diphosphate biosynthesis via DXP pathway; isopentenyl diphosphate from 1-deoxy-D-xylulose 5-phosphate: step 4/6. In terms of biological role, involved in the biosynthesis of isopentenyl diphosphate (IPP) and dimethylallyl diphosphate (DMAPP), two major building blocks of isoprenoid compounds. Catalyzes the conversion of 4-diphosphocytidyl-2-C-methyl-D-erythritol 2-phosphate (CDP-ME2P) to 2-C-methyl-D-erythritol 2,4-cyclodiphosphate (ME-CPP) with a corresponding release of cytidine 5-monophosphate (CMP). The polypeptide is 2-C-methyl-D-erythritol 2,4-cyclodiphosphate synthase (Chloroherpeton thalassium (strain ATCC 35110 / GB-78)).